A 115-amino-acid polypeptide reads, in one-letter code: Large ribosomal subunit protein bL19 (115 aa).

This sequence belongs to the bacterial ribosomal protein bL19 family.

Functionally, this protein is located at the 30S-50S ribosomal subunit interface and may play a role in the structure and function of the aminoacyl-tRNA binding site. The protein is Large ribosomal subunit protein bL19 of Edwardsiella ictaluri (strain 93-146).